The sequence spans 61 residues: ATP synthase F(0) complex subunit 8 (61 aa).

A helical membrane pass occupies residues 10-32; sequence FMILSSTWLIYTIILQPKILSHL.

It belongs to the ATPase protein 8 family. Component of the ATP synthase complex composed at least of ATP5F1A/subunit alpha, ATP5F1B/subunit beta, ATP5MC1/subunit c (homooctomer), MT-ATP6/subunit a, MT-ATP8/subunit 8, ATP5ME/subunit e, ATP5MF/subunit f, ATP5MG/subunit g, ATP5MK/subunit k, ATP5MJ/subunit j, ATP5F1C/subunit gamma, ATP5F1D/subunit delta, ATP5F1E/subunit epsilon, ATP5PF/subunit F6, ATP5PB/subunit b, ATP5PD/subunit d, ATP5PO/subunit OSCP. ATP synthase complex consists of a soluble F(1) head domain (subunits alpha(3) and beta(3)) - the catalytic core - and a membrane F(0) domain - the membrane proton channel (subunits c, a, 8, e, f, g, k and j). These two domains are linked by a central stalk (subunits gamma, delta, and epsilon) rotating inside the F1 region and a stationary peripheral stalk (subunits F6, b, d, and OSCP).

It is found in the mitochondrion membrane. Subunit 8, of the mitochondrial membrane ATP synthase complex (F(1)F(0) ATP synthase or Complex V) that produces ATP from ADP in the presence of a proton gradient across the membrane which is generated by electron transport complexes of the respiratory chain. ATP synthase complex consist of a soluble F(1) head domain - the catalytic core - and a membrane F(1) domain - the membrane proton channel. These two domains are linked by a central stalk rotating inside the F(1) region and a stationary peripheral stalk. During catalysis, ATP synthesis in the catalytic domain of F(1) is coupled via a rotary mechanism of the central stalk subunits to proton translocation. In vivo, can only synthesize ATP although its ATP hydrolase activity can be activated artificially in vitro. Part of the complex F(0) domain. This Chelonia mydas (Green sea-turtle) protein is ATP synthase F(0) complex subunit 8.